The following is a 919-amino-acid chain: Glutamate receptor ionotropic, kainate 3 (919 aa).

Positions 1–31 (MTAPWRRLRSLVWEYWAGLLVCAFWIPDSRG) are cleaved as a signal peptide. Topologically, residues 32–563 (MPHVIRIGGI…VFSFLNPLSP (532 aa)) are extracellular. N-linked (GlcNAc...) asparagine glycosylation is found at Asn70, Asn76, Asn278, Asn381, Asn415, Asn426, and Asn433. A disulfide bridge links Cys99 with Cys350. L-glutamate is bound by residues Pro518, Thr520, and Arg525. Residues Asn548 and Asn551 are each glycosylated (N-linked (GlcNAc...) asparagine). Residues 564–584 (DIWMYVLLAYLGVSCVLFVIA) traverse the membrane as a helical segment. The Cytoplasmic segment spans residues 585 to 636 (RFSPYEWYDAHPCNPGSEVVENNFTLLNSFWFGMGSLMQQGSELMPKALSTR). The helical transmembrane segment at 637 to 657 (IIGGIWWFFTLIIISSYTANL) threads the bilayer. Residues 658 to 820 (AAFLTVERME…KEASALGIQK (163 aa)) are Extracellular-facing. L-glutamate contacts are provided by Ala691, Thr692, and Glu739. An N-linked (GlcNAc...) asparagine glycan is attached at Asn752. Residues 821-841 (IGGIFIVLAAGLVLSVLVAVG) form a helical membrane-spanning segment. At 842–919 (EFVYKLRKTA…CSTSLAPVFP (78 aa)) the chain is on the cytoplasmic side. The residue at position 869 (Ser869) is a Phosphoserine. Lys887 is covalently cross-linked (Glycyl lysine isopeptide (Lys-Gly) (interchain with G-Cter in SUMO1)).

It belongs to the glutamate-gated ion channel (TC 1.A.10.1) family. GRIK3 subfamily. As to quaternary structure, homotetramer, and heterotetramer with either GRIK4 or GRIK5. Can form functional heteromeric receptors with GRIK2. Interacts with PRKCABP. Interacts with NETO2.

It is found in the cell membrane. It localises to the postsynaptic cell membrane. The enzyme catalyses Ca(2+)(in) = Ca(2+)(out). Ionotropic glutamate receptor that functions as a cation-permeable ligand-gated ion channel, gated by L-glutamate and the glutamatergic agonist kainic acid. Binding of the excitatory neurotransmitter L-glutamate induces a conformation change, leading to the opening of the cation channel, and thereby converts the chemical signal to an electrical impulse. The receptor then desensitizes rapidly and enters a transient inactive state, characterized by the presence of bound agonist. In association with GRIK2, involved in presynaptic facilitation of glutamate release at hippocampal mossy fiber synapses. The protein is Glutamate receptor ionotropic, kainate 3 (GRIK3) of Macaca fascicularis (Crab-eating macaque).